The chain runs to 420 residues: Serine hydroxymethyltransferase (420 aa).

(6S)-5,6,7,8-tetrahydrofolate-binding positions include Leu121 and 125–127 (GHL). Lys230 carries the N6-(pyridoxal phosphate)lysine modification. (6S)-5,6,7,8-tetrahydrofolate-binding positions include Glu246 and 354–356 (SPF).

This sequence belongs to the SHMT family. In terms of assembly, homodimer. Pyridoxal 5'-phosphate serves as cofactor.

The protein resides in the cytoplasm. It carries out the reaction (6R)-5,10-methylene-5,6,7,8-tetrahydrofolate + glycine + H2O = (6S)-5,6,7,8-tetrahydrofolate + L-serine. It participates in one-carbon metabolism; tetrahydrofolate interconversion. It functions in the pathway amino-acid biosynthesis; glycine biosynthesis; glycine from L-serine: step 1/1. Catalyzes the reversible interconversion of serine and glycine with tetrahydrofolate (THF) serving as the one-carbon carrier. This reaction serves as the major source of one-carbon groups required for the biosynthesis of purines, thymidylate, methionine, and other important biomolecules. Also exhibits THF-independent aldolase activity toward beta-hydroxyamino acids, producing glycine and aldehydes, via a retro-aldol mechanism. The protein is Serine hydroxymethyltransferase of Rickettsia peacockii (strain Rustic).